A 620-amino-acid polypeptide reads, in one-letter code: Transcription factor GTE11 (620 aa).

The disordered stretch occupies residues 1 to 35 (MTVRNGGFPGDYNRNSFDSPGGCDDSPNASKDDET). In terms of domain architecture, Bromo spans 124 to 230 (TSTMLRMKQC…KFFEVRWKTI (107 aa)). In terms of domain architecture, NET spans 270-351 (NSLLEPAKRV…EFLRENQKKD (82 aa)). Serine 417 is subject to Phosphoserine. The transcription activation domain stretch occupies residues 445 to 620 (EKRYRAALLK…GNEVEEGEID (176 aa)). Residues 470-544 (NQNEKRDPET…MEKSVEINEN (75 aa)) adopt a coiled-coil conformation. Disordered stretches follow at residues 491-511 (KKKE…ARRK) and 597-620 (EDED…GEID).

As to quaternary structure, interacts with BT1, BT2 and BT4.

The protein resides in the nucleus. This is Transcription factor GTE11 (GTE11) from Arabidopsis thaliana (Mouse-ear cress).